A 368-amino-acid chain; its full sequence is Quinolinate synthase (368 aa).

Residues His-46 and Ser-63 each contribute to the iminosuccinate site. Position 110 (Cys-110) interacts with [4Fe-4S] cluster. Iminosuccinate-binding positions include 141-143 (YVN) and Ser-162. Cys-230 provides a ligand contact to [4Fe-4S] cluster. Iminosuccinate-binding positions include 256 to 258 (HPE) and Thr-273. Cys-320 is a [4Fe-4S] cluster binding site.

It belongs to the quinolinate synthase family. Type 3 subfamily. [4Fe-4S] cluster is required as a cofactor.

Its subcellular location is the cytoplasm. It catalyses the reaction iminosuccinate + dihydroxyacetone phosphate = quinolinate + phosphate + 2 H2O + H(+). It participates in cofactor biosynthesis; NAD(+) biosynthesis; quinolinate from iminoaspartate: step 1/1. In terms of biological role, catalyzes the condensation of iminoaspartate with dihydroxyacetone phosphate to form quinolinate. In Bacillus thuringiensis (strain Al Hakam), this protein is Quinolinate synthase.